Consider the following 502-residue polypeptide: Glycerol kinase (502 aa).

Threonine 13 provides a ligand contact to ADP. Positions 13, 14, and 15 each coordinate ATP. Threonine 13 lines the sn-glycerol 3-phosphate pocket. Arginine 17 is a binding site for ADP. Residues arginine 83, glutamate 84, tyrosine 136, and aspartate 246 each coordinate sn-glycerol 3-phosphate. Glycerol is bound by residues arginine 83, glutamate 84, tyrosine 136, aspartate 246, and glutamine 247. ADP is bound by residues threonine 268 and glycine 311. Positions 268, 311, 315, and 412 each coordinate ATP. ADP is bound by residues glycine 412 and asparagine 416.

It belongs to the FGGY kinase family.

The enzyme catalyses glycerol + ATP = sn-glycerol 3-phosphate + ADP + H(+). The protein operates within polyol metabolism; glycerol degradation via glycerol kinase pathway; sn-glycerol 3-phosphate from glycerol: step 1/1. Its activity is regulated as follows. Inhibited by fructose 1,6-bisphosphate (FBP). In terms of biological role, key enzyme in the regulation of glycerol uptake and metabolism. Catalyzes the phosphorylation of glycerol to yield sn-glycerol 3-phosphate. This is Glycerol kinase from Francisella tularensis subsp. mediasiatica (strain FSC147).